The chain runs to 243 residues: 23S rRNA (guanosine-2'-O-)-methyltransferase RlmB (243 aa).

The S-adenosyl-L-methionine site is built by Gly196, Ile216, and Leu225.

It belongs to the class IV-like SAM-binding methyltransferase superfamily. RNA methyltransferase TrmH family. RlmB subfamily. As to quaternary structure, homodimer.

The protein resides in the cytoplasm. The catalysed reaction is guanosine(2251) in 23S rRNA + S-adenosyl-L-methionine = 2'-O-methylguanosine(2251) in 23S rRNA + S-adenosyl-L-homocysteine + H(+). Specifically methylates the ribose of guanosine 2251 in 23S rRNA. The polypeptide is 23S rRNA (guanosine-2'-O-)-methyltransferase RlmB (Shigella flexneri).